A 248-amino-acid polypeptide reads, in one-letter code: MKGLKGLLVLALGFTGLQVFGQQNPDIKIEKLKDNLYVYTTYNTFKGTKYAANAVYMVTDKGVVVIDSPWGEDKFKSFTDEIYKKHGKKVIMNIATHSHDDRAGGLEYFGKLGAKTYSTKMTDSILAKENKPRAKYTFDNNKSFKVGKTEFQVYYPGKGHTADNVVVWFPKDKVLVGGCIVKSGDSKDLGFIGEAYVNDWTQSIHNIQQKFPDVQYVVAGHDDWKDQTSIQHTLDLISEYQQKQKASN.

Residues 1-21 form the signal peptide; it reads MKGLKGLLVLALGFTGLQVFG. Zn(2+) contacts are provided by His97, His99, Asp101, His160, and Cys179. Residue Lys182 coordinates substrate. Residue His221 participates in Zn(2+) binding.

This sequence belongs to the metallo-beta-lactamase superfamily. Class-B beta-lactamase family. In terms of assembly, monomer. It depends on Zn(2+) as a cofactor.

It is found in the periplasm. The catalysed reaction is a beta-lactam + H2O = a substituted beta-amino acid. Its function is as follows. Confers resistance to the different beta-lactams antibiotics (penicillin, cephalosporin and carbapenem) via the hydrolysis of the beta-lactam ring. This chain is Metallo-beta-lactamase type 2 (blaB8), found in Elizabethkingia meningoseptica (Chryseobacterium meningosepticum).